Here is a 296-residue protein sequence, read N- to C-terminus: Bifunctional protein FolD (296 aa).

Residues 166–168, Ser191, and Ile232 contribute to the NADP(+) site; that span reads GRS.

This sequence belongs to the tetrahydrofolate dehydrogenase/cyclohydrolase family. As to quaternary structure, homodimer.

It carries out the reaction (6R)-5,10-methylene-5,6,7,8-tetrahydrofolate + NADP(+) = (6R)-5,10-methenyltetrahydrofolate + NADPH. It catalyses the reaction (6R)-5,10-methenyltetrahydrofolate + H2O = (6R)-10-formyltetrahydrofolate + H(+). It functions in the pathway one-carbon metabolism; tetrahydrofolate interconversion. Functionally, catalyzes the oxidation of 5,10-methylenetetrahydrofolate to 5,10-methenyltetrahydrofolate and then the hydrolysis of 5,10-methenyltetrahydrofolate to 10-formyltetrahydrofolate. The polypeptide is Bifunctional protein FolD (Cereibacter sphaeroides (strain ATCC 17029 / ATH 2.4.9) (Rhodobacter sphaeroides)).